The sequence spans 249 residues: CDP-diacylglycerol pyrophosphatase (249 aa).

A helical transmembrane segment spans residues 7 to 27 (FLLAVVIVAAVAGIGYWKLAA).

Belongs to the Cdh family.

The protein localises to the cell inner membrane. It carries out the reaction a CDP-1,2-diacyl-sn-glycerol + H2O = a 1,2-diacyl-sn-glycero-3-phosphate + CMP + 2 H(+). It functions in the pathway phospholipid metabolism; CDP-diacylglycerol degradation; phosphatidate from CDP-diacylglycerol: step 1/1. This chain is CDP-diacylglycerol pyrophosphatase, found in Citrobacter koseri (strain ATCC BAA-895 / CDC 4225-83 / SGSC4696).